Reading from the N-terminus, the 314-residue chain is Endolytic peptidoglycan transglycosylase RlpA (314 aa).

The first 19 residues, 1–19 (MGWALKKVCFLGVIFLISA), serve as a signal peptide directing secretion. The N-palmitoyl cysteine moiety is linked to residue C20. The S-diacylglycerol cysteine moiety is linked to residue C20. Positions 241–314 (SVSGGKFSLQ…YNQNAVLTRE (74 aa)) constitute an SPOR domain.

Belongs to the RlpA family.

The protein resides in the cell membrane. Functionally, lytic transglycosylase with a strong preference for naked glycan strands that lack stem peptides. The protein is Endolytic peptidoglycan transglycosylase RlpA of Helicobacter pylori (strain J99 / ATCC 700824) (Campylobacter pylori J99).